Reading from the N-terminus, the 708-residue chain is Solute carrier family 15 member 1 (708 aa).

Residues 1-21 (MGMSKSHSFFGYPLSIFFIVV) traverse the membrane as a helical segment. Over 22–53 (NEFCERFSYYGMRAILILYFTNFISWDDNLST) the chain is Extracellular. Asn-50 carries an N-linked (GlcNAc...) asparagine glycan. Residues 54-74 (AIYHTFVALCYLTPILGALIA) traverse the membrane as a helical segment. Residues 75–82 (DSWLGKFK) are Cytoplasmic-facing. The helical transmembrane segment at 83 to 103 (TIVSLSIVYTIGQAVTSVSSI) threads the bilayer. Residues 104 to 118 (NDLTDHNHDGTPDSL) lie on the Extracellular side of the membrane. The chain crosses the membrane as a helical span at residues 119-139 (PVHVVLSLIGLALIALGTGGI). Over 140–161 (KPCVSAFGGDQFEEGQEKQRNR) the chain is Cytoplasmic. The helical transmembrane segment at 162–182 (FFSIFYLAINAGSLLSTIITP) threads the bilayer. Over 183 to 198 (MLRVQQCGIHSKQACY) the chain is Extracellular. The helical transmembrane segment at 199–219 (PLAFGVPAALMAVALIVFVLG) threads the bilayer. Over 220 to 276 (SGMYKKFKPQGNIMGKVAKCIGFAIKNRFRHRSKAFPKREHWLDWAKEKYDERLISQ) the chain is Cytoplasmic. Residues 277–297 (IKMVTRVMFLYIPLPMFWALF) form a helical membrane-spanning segment. Residues 298 to 327 (DQQGSRWTLQATTMSGKIGALEIQPDQMQT) are Extracellular-facing. Residues 328–348 (VNAILIVIMVPIFDAVLYPLI) form a helical membrane-spanning segment. Over 349–361 (AKCGFNFTSLKKM) the chain is Cytoplasmic. Residues 362–382 (AVGMVLASMAFVVAAIVQVEI) form a helical membrane-spanning segment. Over 383 to 584 (DKTLPVFPKG…SANTVNMALQ (202 aa)) the chain is Extracellular. The extracellular domain (ECD) stretch occupies residues 383-584 (DKTLPVFPKG…SANTVNMALQ (202 aa)). N-linked (GlcNAc...) asparagine glycans are attached at residues Asn-404, Asn-408, Asn-439, Asn-509, Asn-514, and Asn-562. A helical membrane pass occupies residues 585-605 (IPQYFLLTCGEVVFSVTGLEF). The Cytoplasmic segment spans residues 606-619 (SYSQAPSNMKSVLQ). The chain crosses the membrane as a helical span at residues 620–640 (AGWLLTVAVGNIIVLIVAGAG). Over 641–645 (QFSKQ) the chain is Extracellular. A helical membrane pass occupies residues 646 to 666 (WAEYILFAALLLVVCVIFAIM). Over 667-708 (ARFYTYINPAEIEAQFDEDEKKNRLEKSNPYFMSGANSQKQM) the chain is Cytoplasmic.

It belongs to the major facilitator superfamily. Proton-dependent oligopeptide transporter (POT/PTR) (TC 2.A.17) family. Interacts (via extracellular domain region) with trypsin. In terms of tissue distribution, expressed in small intestine.

The protein localises to the apical cell membrane. It catalyses the reaction a dipeptide(out) + H(+)(out) = a dipeptide(in) + H(+)(in). The enzyme catalyses an L-amino acid tripeptide(out) + H(+)(out) = an L-amino acid tripeptide(in) + H(+)(in). The catalysed reaction is L-alanyl-L-lysine(out) + H(+)(out) = L-alanyl-L-lysine(in) + H(+)(in). It carries out the reaction L-alanyl-L-proline(out) + H(+)(out) = L-alanyl-L-proline(in) + H(+)(in). It catalyses the reaction L-alanyl-L-valine(out) + H(+)(out) = L-alanyl-L-valine(in) + H(+)(in). The enzyme catalyses carnosine(out) + H(+)(out) = carnosine(in) + H(+)(in). The catalysed reaction is glycyl-L-glutamine(out) + H(+)(out) = glycyl-L-glutamine(in) + H(+)(in). It carries out the reaction glycyl-L-leucine(out) + H(+)(out) = glycyl-L-leucine(in) + H(+)(in). It catalyses the reaction glycyl-L-proline(out) + H(+)(out) = glycyl-L-proline(in) + H(+)(in). The enzyme catalyses glycyl-sarcosine(out) + H(+)(out) = glycyl-sarcosine(in) + H(+)(in). The catalysed reaction is L-leucyl-L-leucine(out) + H(+)(out) = L-leucyl-L-leucine(in) + H(+)(in). It carries out the reaction L-leucyl-L-proline(out) + H(+)(out) = L-leucyl-L-proline(in) + H(+)(in). It catalyses the reaction L-phenylalanyl-L-leucine(out) + H(+)(out) = L-phenylalanyl-L-leucine(in) + H(+)(in). The enzyme catalyses L-phenylalanyl-L-phenylalanine(out) + H(+)(out) = L-phenylalanyl-L-phenylalanine(in) + H(+)(in). The catalysed reaction is L-lysyl-glycine(out) + H(+)(out) = L-lysyl-glycine(in) + H(+)(in). It carries out the reaction L-tyrosylglycine(out) + H(+)(out) = L-tyrosylglycine(in) + H(+)(in). It catalyses the reaction L-alanyl-L-aspartate(out) + 2 H(+)(out) = L-alanyl-L-aspartate(in) + 2 H(+)(in). The enzyme catalyses L-aspartyl-glycine(out) + 2 H(+)(out) = L-aspartyl-glycine(in) + 2 H(+)(in). The catalysed reaction is glycyl-L-aspartate(out) + 2 H(+)(out) = glycyl-L-aspartate(in) + 2 H(+)(in). It carries out the reaction glycyl-L-glutamate(out) + 2 H(+)(out) = glycyl-L-glutamate(in) + 2 H(+)(in). It catalyses the reaction L-alanyl-L-leucyl-L-alanine(out) + H(+)(out) = L-alanyl-L-leucyl-L-alanine(in) + H(+)(in). The enzyme catalyses L-alanyl-L-prolylglycine(out) + H(+)(out) = L-alanyl-L-prolylglycine(in) + H(+)(in). The catalysed reaction is glycylglycyl-L-isoleucine(out) + H(+)(out) = glycylglycyl-L-isoleucine(in) + H(+)(in). It carries out the reaction glycylglycyl-L-proline(out) + H(+)(out) = glycylglycyl-L-proline(in) + H(+)(in). It catalyses the reaction L-methionyl-L-phenylalanyl-L-methionine(out) + H(+)(out) = L-methionyl-L-phenylalanyl-L-methionine(in) + H(+)(in). The enzyme catalyses N-acetyl-D-muramoyl-L-alanyl-D-isoglutamine(out) + 2 H(+)(out) = N-acetyl-D-muramoyl-L-alanyl-D-isoglutamine(in) + 2 H(+)(in). The catalysed reaction is N(alpha)-formyl-L-methionyl-L-leucyl-L-phenylalanine(out) + 2 H(+)(out) = N(alpha)-formyl-L-methionyl-L-leucyl-L-phenylalanine(in) + 2 H(+)(in). Functionally, electrogenic proton-coupled amino-acid transporter that transports oligopeptides of 2 to 4 amino acids with a preference for dipeptides. Transports neutral and monovalently charged peptides with a proton to peptide stoichiometry of 1:1 or 2:1. Primarily responsible for the absorption of dietary di- and tripeptides from the small intestinal lumen. Mediates transepithelial transport of muramyl and N-formylated bacterial dipeptides contributing to recognition of pathogenic bacteria by the mucosal immune system. The protein is Solute carrier family 15 member 1 of Homo sapiens (Human).